The sequence spans 988 residues: Bifunctional glutamine synthetase adenylyltransferase/adenylyl-removing enzyme (988 aa).

An adenylyl removase region spans residues 1–474 (MSSSAIDADI…HYSKLFEGDP (474 aa)). An adenylyl transferase region spans residues 480–988 (LPIDYAGGAE…FNRLIGGNGE (509 aa)).

Belongs to the GlnE family. It depends on Mg(2+) as a cofactor.

It carries out the reaction [glutamine synthetase]-O(4)-(5'-adenylyl)-L-tyrosine + phosphate = [glutamine synthetase]-L-tyrosine + ADP. The enzyme catalyses [glutamine synthetase]-L-tyrosine + ATP = [glutamine synthetase]-O(4)-(5'-adenylyl)-L-tyrosine + diphosphate. Functionally, involved in the regulation of glutamine synthetase GlnA, a key enzyme in the process to assimilate ammonia. When cellular nitrogen levels are high, the C-terminal adenylyl transferase (AT) inactivates GlnA by covalent transfer of an adenylyl group from ATP to specific tyrosine residue of GlnA, thus reducing its activity. Conversely, when nitrogen levels are low, the N-terminal adenylyl removase (AR) activates GlnA by removing the adenylyl group by phosphorolysis, increasing its activity. The regulatory region of GlnE binds the signal transduction protein PII (GlnB) which indicates the nitrogen status of the cell. This is Bifunctional glutamine synthetase adenylyltransferase/adenylyl-removing enzyme from Rhodopseudomonas palustris (strain HaA2).